Here is a 559-residue protein sequence, read N- to C-terminus: Leucine-rich repeat protein soc-2 (559 aa).

Residues 1-17 (METSKEFEFRPAKETSR) are compositionally biased toward basic and acidic residues. The disordered stretch occupies residues 1–55 (METSKEFEFRPAKETSRSKSPGGIVGRLSNFARNKARHSLSEKGSNSVGGSGGAG). LRR repeat units follow at residues 74-95 (QDQR…IKEL), 97-118 (QLTE…IGQL), 120-142 (NLKK…ASLE), 143-164 (SLET…IYKI), 166-187 (SLET…IGNL), 189-210 (KLKM…IGKL), 212-233 (SLVV…IGDC), 235-256 (SLTQ…IGKL), 258-279 (NLVR…LESC), 281-302 (QLEE…LLTM), 305-326 (KIHT…GPQQ), 329-350 (STVT…IFSK), 353-374 (RLTK…MGSW), 376-397 (SITE…IEKL), 399-420 (NLEI…IGNL), 422-443 (KLRE…IGFL), 445-466 (HLTK…IGNL), 468-489 (SLQD…IGHL), 491-513 (SLKS…LALC), and 515-536 (SLEI…ITAG).

The protein belongs to the SHOC2 family. As to quaternary structure, interacts with let-60.

Acts as a Ras effector and participates in MAPK pathway activation. Probably acts as a scaffolding protein in a protein phosphatase complex that specifically dephosphorylates Raf kinase and stimulates Raf activity at specialized signaling complexes upon Ras activation. Required for vulval development. Involved in fluid homeostasis. Plays a role in nicotinic acetylcholine receptor (nAChR)-mediated sensitivity to nicotine. This Caenorhabditis elegans protein is Leucine-rich repeat protein soc-2 (soc-2).